Consider the following 555-residue polypeptide: Phosphoglucomutase (555 aa).

2 residues coordinate alpha-D-glucose 1,6-bisphosphate: Arg22 and Ser114. Ser114 (phosphoserine intermediate) is an active-site residue. Residues Ser114, Asp279, Asp281, and Asp283 each coordinate Mg(2+). A Phosphoserine modification is found at Ser114. The alpha-D-glucose 1,6-bisphosphate site is built by Asp283, Arg284, Thr347, Glu366, Ser368, and Lys379.

This sequence belongs to the phosphohexose mutase family. Monomer. Requires Mg(2+) as cofactor.

Its subcellular location is the cytoplasm. It carries out the reaction alpha-D-glucose 1-phosphate = alpha-D-glucose 6-phosphate. The catalysed reaction is O-phospho-L-seryl-[protein] + alpha-D-glucose 1-phosphate = alpha-D-glucose 1,6-bisphosphate + L-seryl-[protein]. It catalyses the reaction alpha-D-glucose 1,6-bisphosphate + L-seryl-[protein] = O-phospho-L-seryl-[protein] + alpha-D-glucose 6-phosphate. In terms of biological role, catalyzes the reversible isomerization of alpha-D-glucose 1-phosphate to alpha-D-glucose 6-phosphate. The mechanism proceeds via the intermediate compound alpha-D-glucose 1,6-bisphosphate. Key enzyme in hexose metabolism. The reverse reaction is an essential step for biosynthesis because glucose 1-phosphate is the starting point for the synthesis of UDP-glucose, which acts as a precursor for the synthesis of oligosaccharides and trehalose. The protein is Phosphoglucomutase (pgmA) of Aspergillus oryzae (strain ATCC 42149 / RIB 40) (Yellow koji mold).